The following is a 127-amino-acid chain: Large ribosomal subunit protein uL22 (127 aa).

Part of the 50S ribosomal subunit.

This protein binds specifically to 23S rRNA; its binding is stimulated by other ribosomal proteins, e.g. L4, L17, and L20. It is important during the early stages of 50S assembly. It makes multiple contacts with different domains of the 23S rRNA in the assembled 50S subunit and ribosome. Functionally, the globular domain of the protein is located near the polypeptide exit tunnel on the outside of the subunit, while an extended beta-hairpin is found that lines the wall of the exit tunnel in the center of the 70S ribosome. This Rhodopseudomonas palustris (strain ATCC BAA-98 / CGA009) protein is Large ribosomal subunit protein uL22.